A 144-amino-acid polypeptide reads, in one-letter code: MFNIKIKRINNLAKLPEYAHDGDAGMDLFSIEEKVIDPGGVALIHTGIKIELPEKTEAQIRPRSGLALKNSITVLNTPGTIDEGYRGEIGVILINHGKESFKVEKHMKVAQMVIKPVLKVKILEVDELSDTQRAEGGFGSTGVK.

Substrate contacts are provided by residues 63–65 (RSG), N76, and 80–82 (TID).

It belongs to the dUTPase family. The cofactor is Mg(2+).

It carries out the reaction dUTP + H2O = dUMP + diphosphate + H(+). The protein operates within pyrimidine metabolism; dUMP biosynthesis; dUMP from dCTP (dUTP route): step 2/2. In terms of biological role, this enzyme is involved in nucleotide metabolism: it produces dUMP, the immediate precursor of thymidine nucleotides and it decreases the intracellular concentration of dUTP so that uracil cannot be incorporated into DNA. The protein is Deoxyuridine 5'-triphosphate nucleotidohydrolase of Alkaliphilus metalliredigens (strain QYMF).